The primary structure comprises 474 residues: Dihydrolipoyl dehydrogenase (474 aa).

Residues 36–45 (ERYNTLGGVC), Lys54, and Gly117 contribute to the FAD site. Cys45 and Cys50 are oxidised to a cystine. Residues 182-186 (GGGII) and Glu205 each bind NAD(+). Lys220 is subject to N6-acetyllysine. Residues Val238 and 270 to 273 (AIGR) each bind NAD(+). The FAD site is built by Asp313 and Ala321. The active-site Proton acceptor is the His445.

The protein belongs to the class-I pyridine nucleotide-disulfide oxidoreductase family. Homodimer. It depends on FAD as a cofactor.

It is found in the cytoplasm. It carries out the reaction N(6)-[(R)-dihydrolipoyl]-L-lysyl-[protein] + NAD(+) = N(6)-[(R)-lipoyl]-L-lysyl-[protein] + NADH + H(+). Lipoamide dehydrogenase is a component of the glycine cleavage system as well as of the alpha-ketoacid dehydrogenase complexes. The chain is Dihydrolipoyl dehydrogenase (lpdA) from Shigella flexneri.